We begin with the raw amino-acid sequence, 381 residues long: L-lactate dehydrogenase (381 aa).

The FMN hydroxy acid dehydrogenase domain occupies 1–380; it reads MIISSANDYR…TRDALVDLSK (380 aa). Substrate is bound at residue Y24. 2 residues coordinate FMN: S106 and Q127. Y129 is a binding site for substrate. T155 contacts FMN. R164 contributes to the substrate binding site. An FMN-binding site is contributed by K251. H275 serves as the catalytic Proton acceptor. R278 contributes to the substrate binding site. Residue 306 to 330 participates in FMN binding; that stretch reads DSGIRNGLDIVRMLALGADATMLGR.

Belongs to the FMN-dependent alpha-hydroxy acid dehydrogenase family. Requires FMN as cofactor.

It is found in the cell inner membrane. The enzyme catalyses (S)-lactate + A = pyruvate + AH2. Catalyzes the conversion of L-lactate to pyruvate. Is coupled to the respiratory chain. The chain is L-lactate dehydrogenase from Actinobacillus pleuropneumoniae serotype 5b (strain L20).